The chain runs to 663 residues: Zyxin (663 aa).

The disordered stretch occupies residues 35-438 (PPKPKINPFK…QQDQTLGSQG (404 aa)). Composition is skewed to pro residues over residues 122–148 (FPPPPPPEFSEPFPPPIEEFFPSPPPL) and 160–211 (VPVP…PPSV). A compositionally biased stretch (polar residues) spans 298 to 314 (PQKTTEPPAEASQSSPK). 2 stretches are compositionally biased toward basic and acidic residues: residues 342 to 353 (QRERPRVLEKPR) and 360 to 375 (EPEHEPTVEVQVERTR). Polar residues-rich tracts occupy residues 377–393 (LGPQTESGRSPGAQSTG) and 427–438 (TGQQDQTLGSQG). 3 consecutive LIM zinc-binding domains span residues 470 to 531 (ELCG…TLEC), 532 to 589 (CAVC…RRYA), and 590 to 660 (PRCC…RARA).

The protein belongs to the zyxin/ajuba family. In terms of assembly, interacts (via LIM2 domain) with hesx1/anf1. At the early gastrula stage, expressed at a low level in the animal hemisphere. Expression rises by the end of gastrulation in the anterior part of the embryo, where it gradually increases by the midneurula stage. During neurulation, expression continues most intensively in the anterior part of the neural plate and around it. At later stages, intensely expressed in the brain and at lower levels in the spinal cord, eyes, nasal placodes, within somites, and around the cement gland.

It is found in the cytoplasm. The protein localises to the cytoskeleton. Its subcellular location is the cell junction. The protein resides in the focal adhesion. Adhesion plaque protein. May be a component of a signal transduction pathway that mediates adhesion-stimulated changes in gene expression. Suppresses the transcription-repressing activity of hesx1/anf1. In Xenopus laevis (African clawed frog), this protein is Zyxin.